A 51-amino-acid chain; its full sequence is Lysis protein for colicin A (51 aa).

The first 18 residues, 1 to 18 (MKKIIICVILLAIMLLAA), serve as a signal peptide directing secretion. A lipid anchor (N-palmitoyl cysteine) is attached at C19. A lipid anchor (S-diacylglycerol cysteine) is attached at C19. The disordered stretch occupies residues 27-51 (TGGGSVSPSSIVTGVSMGSDGVGNP).

It localises to the cell outer membrane. Functionally, lysis proteins are required for both colicin release and partial cell lysis. This is Lysis protein for colicin A (cal) from Citrobacter freundii.